The primary structure comprises 282 residues: Shikimate dehydrogenase (NADP(+)) (282 aa).

Shikimate-binding positions include 15–17 and threonine 62; that span reads SKS. The Proton acceptor role is filled by lysine 66. Asparagine 87 and aspartate 103 together coordinate shikimate. Residues 127–131, 151–156, and methionine 220 each bind NADP(+); these read GAGGA and NRTHTK. Position 222 (tyrosine 222) interacts with shikimate. Glycine 244 is an NADP(+) binding site.

It belongs to the shikimate dehydrogenase family. Homodimer.

The enzyme catalyses shikimate + NADP(+) = 3-dehydroshikimate + NADPH + H(+). It participates in metabolic intermediate biosynthesis; chorismate biosynthesis; chorismate from D-erythrose 4-phosphate and phosphoenolpyruvate: step 4/7. Involved in the biosynthesis of the chorismate, which leads to the biosynthesis of aromatic amino acids. Catalyzes the reversible NADPH linked reduction of 3-dehydroshikimate (DHSA) to yield shikimate (SA). The polypeptide is Shikimate dehydrogenase (NADP(+)) (Shewanella putrefaciens (strain CN-32 / ATCC BAA-453)).